Here is a 261-residue protein sequence, read N- to C-terminus: Ice-binding protein (261 aa).

A signal peptide spans 1-20 (MSLLSIITIGLAGLGGLVNG). N-linked (GlcNAc...) asparagine glycosylation occurs at asparagine 185.

This sequence belongs to the ice-binding protein family. Homodimer. Dimerization is not required for the thermal hysteresis (TH) activity. In terms of processing, glycosylated. Glycosylation is not required for the thermal hysteresis (TH) activity. Glycosylation may increase stability and secretion of this protein.

It is found in the secreted. Functionally, confers freeze tolerance. Binds to the surface of ice crystals and inhibits their growth. Has low thermal hysteresis (TH) activity, which is the ability to lower the freezing point of an aqueous solution below its melting point. The TH activity of this protein is approximately 0.2 degrees Celsius at 50 uM and 0.3 degrees Celsius at 400 uM. The protein is Ice-binding protein of Leucosporidium sp. (strain AY30) (Arctic yeast).